Reading from the N-terminus, the 205-residue chain is LexA repressor (205 aa).

Positions R28–K48 form a DNA-binding region, H-T-H motif. Catalysis depends on for autocatalytic cleavage activity residues S122 and K159.

Belongs to the peptidase S24 family. In terms of assembly, homodimer.

It carries out the reaction Hydrolysis of Ala-|-Gly bond in repressor LexA.. Its function is as follows. Represses a number of genes involved in the response to DNA damage (SOS response), including recA and lexA. In the presence of single-stranded DNA, RecA interacts with LexA causing an autocatalytic cleavage which disrupts the DNA-binding part of LexA, leading to derepression of the SOS regulon and eventually DNA repair. The protein is LexA repressor of Idiomarina loihiensis (strain ATCC BAA-735 / DSM 15497 / L2-TR).